The following is an 85-amino-acid chain: SKP1-like protein 6 (85 aa).

The tract at residues 65–85 (MMAANYLNIQSLLDLTFSNCR) is interaction with the F-box domain of F-box proteins.

This sequence belongs to the SKP1 family. Part of a SCF (SKP1-cullin-F-box) protein ligase complex.

Its subcellular location is the nucleus. It participates in protein modification; protein ubiquitination. Involved in ubiquitination and subsequent proteasomal degradation of target proteins. Together with CUL1, RBX1 and a F-box protein, it forms a SCF E3 ubiquitin ligase complex. The functional specificity of this complex depends on the type of F-box protein. In the SCF complex, it serves as an adapter that links the F-box protein to CUL1. This Arabidopsis thaliana (Mouse-ear cress) protein is SKP1-like protein 6 (ASK6).